Reading from the N-terminus, the 756-residue chain is 5-methyltetrahydropteroyltriglutamate--homocysteine methyltransferase (756 aa).

5-methyltetrahydropteroyltri-L-glutamate-binding positions include 15 to 18 and lysine 111; that span reads REWK. The tract at residues 392–411 is disordered; it reads GAATSHNLENKKRPQSFNER. The segment covering 399–411 has biased composition (basic and acidic residues); it reads LENKKRPQSFNER. L-homocysteine contacts are provided by residues 429–431 and glutamate 482; that span reads IGS. Residues 429–431 and glutamate 482 each bind L-methionine; that span reads IGS. Residues 513–514 and tryptophan 559 each bind 5-methyltetrahydropteroyltri-L-glutamate; that span reads RC. Aspartate 597 is an L-homocysteine binding site. Aspartate 597 provides a ligand contact to L-methionine. Glutamate 603 lines the 5-methyltetrahydropteroyltri-L-glutamate pocket. 3 residues coordinate Zn(2+): histidine 639, cysteine 641, and glutamate 663. Catalysis depends on histidine 692, which acts as the Proton donor. Residue cysteine 724 participates in Zn(2+) binding.

The protein belongs to the vitamin-B12 independent methionine synthase family. It depends on Zn(2+) as a cofactor.

The catalysed reaction is 5-methyltetrahydropteroyltri-L-glutamate + L-homocysteine = tetrahydropteroyltri-L-glutamate + L-methionine. It participates in amino-acid biosynthesis; L-methionine biosynthesis via de novo pathway; L-methionine from L-homocysteine (MetE route): step 1/1. Catalyzes the transfer of a methyl group from 5-methyltetrahydrofolate to homocysteine resulting in methionine formation. The sequence is that of 5-methyltetrahydropteroyltriglutamate--homocysteine methyltransferase from Halalkalibacterium halodurans (strain ATCC BAA-125 / DSM 18197 / FERM 7344 / JCM 9153 / C-125) (Bacillus halodurans).